We begin with the raw amino-acid sequence, 150 residues long: D-aminoacyl-tRNA deacylase (150 aa).

The short motif at 140–141 (GP) is the Gly-cisPro motif, important for rejection of L-amino acids element.

This sequence belongs to the DTD family. Homodimer.

It localises to the cytoplasm. The catalysed reaction is glycyl-tRNA(Ala) + H2O = tRNA(Ala) + glycine + H(+). The enzyme catalyses a D-aminoacyl-tRNA + H2O = a tRNA + a D-alpha-amino acid + H(+). Its function is as follows. An aminoacyl-tRNA editing enzyme that deacylates mischarged D-aminoacyl-tRNAs. Also deacylates mischarged glycyl-tRNA(Ala), protecting cells against glycine mischarging by AlaRS. Acts via tRNA-based rather than protein-based catalysis; rejects L-amino acids rather than detecting D-amino acids in the active site. By recycling D-aminoacyl-tRNA to D-amino acids and free tRNA molecules, this enzyme counteracts the toxicity associated with the formation of D-aminoacyl-tRNA entities in vivo and helps enforce protein L-homochirality. The protein is D-aminoacyl-tRNA deacylase (DTD1) of Kluyveromyces lactis (strain ATCC 8585 / CBS 2359 / DSM 70799 / NBRC 1267 / NRRL Y-1140 / WM37) (Yeast).